Reading from the N-terminus, the 478-residue chain is Glutamyl-tRNA(Gln) amidotransferase subunit A 2 (478 aa).

Residues Lys79 and Ser154 each act as charge relay system in the active site. Residue Ser178 is the Acyl-ester intermediate of the active site.

Belongs to the amidase family. GatA subfamily. Heterotrimer of A, B and C subunits.

It catalyses the reaction L-glutamyl-tRNA(Gln) + L-glutamine + ATP + H2O = L-glutaminyl-tRNA(Gln) + L-glutamate + ADP + phosphate + H(+). Its function is as follows. Allows the formation of correctly charged Gln-tRNA(Gln) through the transamidation of misacylated Glu-tRNA(Gln) in organisms which lack glutaminyl-tRNA synthetase. The reaction takes place in the presence of glutamine and ATP through an activated gamma-phospho-Glu-tRNA(Gln). The polypeptide is Glutamyl-tRNA(Gln) amidotransferase subunit A 2 (gatA2) (Clostridium acetobutylicum (strain ATCC 824 / DSM 792 / JCM 1419 / IAM 19013 / LMG 5710 / NBRC 13948 / NRRL B-527 / VKM B-1787 / 2291 / W)).